The following is a 302-amino-acid chain: tRNA dimethylallyltransferase (302 aa).

10-17 (GPTATGKS) contacts ATP. 12–17 (TATGKS) lines the substrate pocket. Residues 35–38 (DSRQ) form an interaction with substrate tRNA region.

This sequence belongs to the IPP transferase family. Monomer. It depends on Mg(2+) as a cofactor.

The catalysed reaction is adenosine(37) in tRNA + dimethylallyl diphosphate = N(6)-dimethylallyladenosine(37) in tRNA + diphosphate. Its function is as follows. Catalyzes the transfer of a dimethylallyl group onto the adenine at position 37 in tRNAs that read codons beginning with uridine, leading to the formation of N6-(dimethylallyl)adenosine (i(6)A). The protein is tRNA dimethylallyltransferase of Acaryochloris marina (strain MBIC 11017).